Reading from the N-terminus, the 350-residue chain is Biotin synthase (350 aa).

The Radical SAM core domain occupies 41–268 (NEVQISRLLS…KSRVRLSAGR (228 aa)). Residues cysteine 56, cysteine 60, and cysteine 63 each coordinate [4Fe-4S] cluster. Positions 100, 131, 191, and 263 each coordinate [2Fe-2S] cluster.

The protein belongs to the radical SAM superfamily. Biotin synthase family. In terms of assembly, homodimer. [4Fe-4S] cluster is required as a cofactor. Requires [2Fe-2S] cluster as cofactor.

It carries out the reaction (4R,5S)-dethiobiotin + (sulfur carrier)-SH + 2 reduced [2Fe-2S]-[ferredoxin] + 2 S-adenosyl-L-methionine = (sulfur carrier)-H + biotin + 2 5'-deoxyadenosine + 2 L-methionine + 2 oxidized [2Fe-2S]-[ferredoxin]. It functions in the pathway cofactor biosynthesis; biotin biosynthesis; biotin from 7,8-diaminononanoate: step 2/2. In terms of biological role, catalyzes the conversion of dethiobiotin (DTB) to biotin by the insertion of a sulfur atom into dethiobiotin via a radical-based mechanism. The polypeptide is Biotin synthase (Shewanella piezotolerans (strain WP3 / JCM 13877)).